Reading from the N-terminus, the 343-residue chain is Ribosomal RNA small subunit methyltransferase C (343 aa).

It belongs to the methyltransferase superfamily. RsmC family. In terms of assembly, monomer.

The protein localises to the cytoplasm. The catalysed reaction is guanosine(1207) in 16S rRNA + S-adenosyl-L-methionine = N(2)-methylguanosine(1207) in 16S rRNA + S-adenosyl-L-homocysteine + H(+). Functionally, specifically methylates the guanine in position 1207 of 16S rRNA in the 30S particle. The sequence is that of Ribosomal RNA small subunit methyltransferase C from Escherichia coli O17:K52:H18 (strain UMN026 / ExPEC).